The primary structure comprises 264 residues: General transcription factor IIF subunit 2 (264 aa).

This sequence belongs to the TFIIF beta subunit family. In terms of assembly, heterodimer of an alpha and a beta subunit.

The protein localises to the nucleus. In terms of biological role, TFIIF is a general transcription initiation factor that binds to RNA polymerase II and helps to recruit it to the initiation complex in collaboration with TFIIB. The protein is General transcription factor IIF subunit 2 (gtf2f2) of Xenopus laevis (African clawed frog).